The following is a 161-amino-acid chain: uncharacterized protein (161 aa).

This is an uncharacterized protein from Escherichia coli (strain K12).